Here is a 508-residue protein sequence, read N- to C-terminus: MGLPWYRVHTVVLNDPGRLLSVHIMHTALVSGWAGSMALYELAVFDPSDPVLDPMWRQGMFVIPFMTRLGINNSWGGWSITGETVTNPGLWSYEGVAGAHIVFSGLCFLAAIWHWVYWDLDIFCDERTGKPSLDLPKIFGIHLFLSGVACFGSGAFHVTGLYGPGIWVSDPYGLTGKIQPVNPAWGAEGFDPFVPGGIASHHIAAGILGILAGLFHLSVRPPQRLYKGLRMGNIETVLSSSIAAVFFAAFIVAGTMWYGSATAPVELFGPTRYQWDQGYFQQEIDRRVRAGLSENLSLSEAWSKIPEKLAFYDYIGNNPAKGGLFRAGAMDNGDGIAVGWLGHPIFRDKEGHELFVRRMPTFFETFPVVLVDEEGIVKADVPFRRAESKYSVEQVGVTVEFYGGELDGVSFGDPATVKKYARRAQLGEIFELDRATLKSDGVFRSSPRGWFTFGHATFALLFFFGHIWHGARTLFRDVFAGIDPDLDAQVEFGAFQXLGDPTTKRQIV.

Helical transmembrane passes span 21–36 (SVHI…WAGS), 101–115 (IVFS…IWHW), 140–156 (GIHL…SGAF), 203–218 (IAAG…FHLS), 237–252 (VLSS…AFIV), and 457–472 (TFAL…HGAR).

This sequence belongs to the PsbB/PsbC family. PsbB subfamily. As to quaternary structure, PSII is composed of 1 copy each of membrane proteins PsbA, PsbB, PsbC, PsbD, PsbE, PsbF, PsbH, PsbI, PsbJ, PsbK, PsbL, PsbM, PsbT, PsbX, PsbY, PsbZ, Psb30/Ycf12, at least 3 peripheral proteins of the oxygen-evolving complex and a large number of cofactors. It forms dimeric complexes. Binds multiple chlorophylls. PSII binds additional chlorophylls, carotenoids and specific lipids. is required as a cofactor.

It is found in the plastid. The protein localises to the chloroplast thylakoid membrane. Functionally, one of the components of the core complex of photosystem II (PSII). It binds chlorophyll and helps catalyze the primary light-induced photochemical processes of PSII. PSII is a light-driven water:plastoquinone oxidoreductase, using light energy to abstract electrons from H(2)O, generating O(2) and a proton gradient subsequently used for ATP formation. The polypeptide is Photosystem II CP47 reaction center protein (Cycas taitungensis (Prince sago)).